We begin with the raw amino-acid sequence, 327 residues long: Tagatose 1,6-diphosphate aldolase 2 (327 aa).

Belongs to the aldolase LacD family.

It carries out the reaction D-tagatofuranose 1,6-bisphosphate = D-glyceraldehyde 3-phosphate + dihydroxyacetone phosphate. It participates in carbohydrate metabolism; D-tagatose 6-phosphate degradation; D-glyceraldehyde 3-phosphate and glycerone phosphate from D-tagatose 6-phosphate: step 2/2. The polypeptide is Tagatose 1,6-diphosphate aldolase 2 (lacD2) (Streptococcus pyogenes serotype M3 (strain ATCC BAA-595 / MGAS315)).